The sequence spans 305 residues: RxLR effector protein 17 (305 aa).

The signal sequence occupies residues 1–24 (MQSILWFALIASVVFLVLVDLASG). The RxLR-dEER motif lies at 45–60 (RLLRAAHLDRKLSEER). Residues N207 and N227 are each glycosylated (N-linked (GlcNAc...) asparagine). A w motif region spans residues 247-269 (LHLKWAVEAKSPKDVVERILKDL).

Belongs to the RxLR effector family. Interacts with host A.thaliana At1G14340.

It localises to the secreted. It is found in the host cell membrane. Secreted effector that confers enhanced plant susceptibility during both compatible and incompatible interactions between the pathogen and its host. Promotes the sexual reproduction of the pathogen in the plant host. In Hyaloperonospora arabidopsidis (strain Emoy2) (Downy mildew agent), this protein is RxLR effector protein 17.